The chain runs to 179 residues: MQDRVERVTRYIDNVMANTEGTRAEGVYVVSVALKGRAGQQKLEVLVDSDKGIAVEQCAWVSRRILEKLEEDDEPLSEEIAIEVSSPGLGTPLQLPRQYYRHLGKLLHVRYRTPEGAEAEIEGYLQEAQLDGVNGGDSADSVIVLKPKVQGKRPRNAQPLENIRLPLSRIIKAVPEAEL.

Belongs to the RimP family.

The protein resides in the cytoplasm. In terms of biological role, required for maturation of 30S ribosomal subunits. This Chlorobium chlorochromatii (strain CaD3) protein is Ribosome maturation factor RimP.